A 711-amino-acid polypeptide reads, in one-letter code: DNA topoisomerase 3 (711 aa).

The Toprim domain maps to 2–135; sequence KSLILAEKPS…IRRLWISSVT (134 aa). Mg(2+) is bound by residues E8 and D104. Residues 152 to 580 enclose the Topo IA-type catalytic domain; that stretch reads YNDLYYAALA…EMKDFTKDVV (429 aa). Positions 186 to 191 are interaction with DNA; sequence SLGRVQ. Y305 functions as the O-(5'-phospho-DNA)-tyrosine intermediate in the catalytic mechanism. The segment at 691–711 is disordered; the sequence is MNKNEGLDNNPFKDALKNLNL.

It belongs to the type IA topoisomerase family. It depends on Mg(2+) as a cofactor.

The enzyme catalyses ATP-independent breakage of single-stranded DNA, followed by passage and rejoining.. In terms of biological role, releases the supercoiling and torsional tension of DNA, which is introduced during the DNA replication and transcription, by transiently cleaving and rejoining one strand of the DNA duplex. Introduces a single-strand break via transesterification at a target site in duplex DNA. The scissile phosphodiester is attacked by the catalytic tyrosine of the enzyme, resulting in the formation of a DNA-(5'-phosphotyrosyl)-enzyme intermediate and the expulsion of a 3'-OH DNA strand. The free DNA strand then undergoes passage around the unbroken strand, thus removing DNA supercoils. Finally, in the religation step, the DNA 3'-OH attacks the covalent intermediate to expel the active-site tyrosine and restore the DNA phosphodiester backbone. The protein is DNA topoisomerase 3 of Staphylococcus aureus (strain NCTC 8325 / PS 47).